The primary structure comprises 28 residues: Cysteine-rich venom protein asurin-2 (28 aa).

Residues 1–15 (SNKKDYRKEIVDKHN) are compositionally biased toward basic and acidic residues. The disordered stretch occupies residues 1–28 (SNKKDYRKEIVDKHNALSRSVKPTASNM). Residues 17–28 (LSRSVKPTASNM) are compositionally biased toward polar residues.

Belongs to the CRISP family. In terms of processing, contains 8 disulfide bonds. In terms of tissue distribution, expressed by the venom gland.

The protein localises to the secreted. Functionally, blocks contraction of smooth muscle elicited by high potassium-induced depolarization, but does not block caffeine-stimulated contraction. May target voltage-gated calcium channels on smooth muscle. This is Cysteine-rich venom protein asurin-2 from Austrelaps superbus (Lowland copperhead snake).